Consider the following 384-residue polypeptide: 1-deoxy-D-xylulose 5-phosphate reductoisomerase (384 aa).

NADPH is bound by residues threonine 10, glycine 11, serine 12, isoleucine 13, glycine 36, and asparagine 122. Lysine 123 contacts 1-deoxy-D-xylulose 5-phosphate. Glutamate 124 contributes to the NADPH binding site. Position 148 (aspartate 148) interacts with Mn(2+). Residues serine 149, glutamate 150, serine 174, and histidine 197 each coordinate 1-deoxy-D-xylulose 5-phosphate. Glutamate 150 lines the Mn(2+) pocket. An NADPH-binding site is contributed by glycine 203. 1-deoxy-D-xylulose 5-phosphate-binding residues include serine 210, asparagine 215, lysine 216, and glutamate 219. Glutamate 219 contacts Mn(2+).

The protein belongs to the DXR family. Mg(2+) serves as cofactor. Mn(2+) is required as a cofactor.

It catalyses the reaction 2-C-methyl-D-erythritol 4-phosphate + NADP(+) = 1-deoxy-D-xylulose 5-phosphate + NADPH + H(+). The protein operates within isoprenoid biosynthesis; isopentenyl diphosphate biosynthesis via DXP pathway; isopentenyl diphosphate from 1-deoxy-D-xylulose 5-phosphate: step 1/6. Functionally, catalyzes the NADPH-dependent rearrangement and reduction of 1-deoxy-D-xylulose-5-phosphate (DXP) to 2-C-methyl-D-erythritol 4-phosphate (MEP). In Chlorobium phaeobacteroides (strain DSM 266 / SMG 266 / 2430), this protein is 1-deoxy-D-xylulose 5-phosphate reductoisomerase.